Consider the following 113-residue polypeptide: uncharacterized protein (113 aa).

Transmembrane regions (helical) follow at residues 1–21 (MLIA…FGTW) and 48–68 (IMLA…ALIV).

This sequence to M.tuberculosis Rv0039.

Its subcellular location is the cell membrane. This is an uncharacterized protein from Mycobacterium leprae (strain TN).